A 525-amino-acid polypeptide reads, in one-letter code: Arabinose import ATP-binding protein AraG 2 (525 aa).

The segment at 1–25 (MTDTTIRARGAQAAGSPAGAGPLDA) is disordered. Residues 7 to 25 (RARGAQAAGSPAGAGPLDA) are compositionally biased toward low complexity. 2 ABC transporter domains span residues 35–270 (LELD…MVGR) and 281–524 (REPG…LALP). 67-74 (GENGAGKS) contacts ATP.

Belongs to the ABC transporter superfamily. Arabinose importer (TC 3.A.1.2.2) family. The complex is composed of two ATP-binding proteins (AraG), two transmembrane proteins (AraH) and a solute-binding protein (AraF).

The protein localises to the cell inner membrane. It catalyses the reaction L-arabinose(out) + ATP + H2O = L-arabinose(in) + ADP + phosphate + H(+). In terms of biological role, part of the ABC transporter complex AraFGH involved in arabinose import. Responsible for energy coupling to the transport system. In Burkholderia thailandensis (strain ATCC 700388 / DSM 13276 / CCUG 48851 / CIP 106301 / E264), this protein is Arabinose import ATP-binding protein AraG 2.